A 129-amino-acid chain; its full sequence is uncharacterized protein (129 aa).

It localises to the cytoplasm. The protein localises to the cytosol. Its subcellular location is the nucleus. This is an uncharacterized protein from Schizosaccharomyces pombe (strain 972 / ATCC 24843) (Fission yeast).